Consider the following 285-residue polypeptide: Bifunctional protein FolD (285 aa).

NADP(+) is bound by residues 166 to 168 (GAS) and Ile232.

This sequence belongs to the tetrahydrofolate dehydrogenase/cyclohydrolase family. As to quaternary structure, homodimer.

The catalysed reaction is (6R)-5,10-methylene-5,6,7,8-tetrahydrofolate + NADP(+) = (6R)-5,10-methenyltetrahydrofolate + NADPH. The enzyme catalyses (6R)-5,10-methenyltetrahydrofolate + H2O = (6R)-10-formyltetrahydrofolate + H(+). The protein operates within one-carbon metabolism; tetrahydrofolate interconversion. In terms of biological role, catalyzes the oxidation of 5,10-methylenetetrahydrofolate to 5,10-methenyltetrahydrofolate and then the hydrolysis of 5,10-methenyltetrahydrofolate to 10-formyltetrahydrofolate. This is Bifunctional protein FolD from Baumannia cicadellinicola subsp. Homalodisca coagulata.